The chain runs to 395 residues: Flap endonuclease 1 (395 aa).

The segment at 1-104 (MGIKHLYQII…GELAKRFMRK (104 aa)) is N-domain. Asp-34 is a binding site for Mg(2+). DNA-binding residues include Arg-47 and Arg-70. Residues Asp-86, Glu-158, Glu-160, Asp-179, and Asp-181 each coordinate Mg(2+). The interval 122–253 (EVEKFSRRTV…NTALKLIRDH (132 aa)) is I-domain. Glu-158 contributes to the DNA binding site. 2 residues coordinate DNA: Gly-231 and Asp-233. Residue Asp-233 coordinates Mg(2+). Residues 341–349 (QQSRLEGFF) form an interaction with PCNA region. A compositionally biased stretch (basic and acidic residues) spans 360 to 389 (AVLKRKHEEKLELQKKKKKEDAKAKKEAKS). Residues 360–395 (AVLKRKHEEKLELQKKKKKEDAKAKKEAKSKPRGTT) form a disordered region.

The protein belongs to the XPG/RAD2 endonuclease family. FEN1 subfamily. Interacts with PCNA. Three molecules of FEN1 bind to one PCNA trimer with each molecule binding to one PCNA monomer. PCNA stimulates the nuclease activity without altering cleavage specificity. Mg(2+) is required as a cofactor. Phosphorylated. Phosphorylation upon DNA damage induces relocalization to the nuclear plasma.

The protein resides in the nucleus. The protein localises to the nucleolus. Its subcellular location is the nucleoplasm. It is found in the mitochondrion. Structure-specific nuclease with 5'-flap endonuclease and 5'-3' exonuclease activities involved in DNA replication and repair. During DNA replication, cleaves the 5'-overhanging flap structure that is generated by displacement synthesis when DNA polymerase encounters the 5'-end of a downstream Okazaki fragment. It enters the flap from the 5'-end and then tracks to cleave the flap base, leaving a nick for ligation. Also involved in the long patch base excision repair (LP-BER) pathway, by cleaving within the apurinic/apyrimidinic (AP) site-terminated flap. Acts as a genome stabilization factor that prevents flaps from equilibrating into structures that lead to duplications and deletions. Also possesses 5'-3' exonuclease activity on nicked or gapped double-stranded DNA, and exhibits RNase H activity. Also involved in replication and repair of rDNA and in repairing mitochondrial DNA. The chain is Flap endonuclease 1 from Ajellomyces capsulatus (strain NAm1 / WU24) (Darling's disease fungus).